The following is a 291-amino-acid chain: Kidney mitochondrial carrier protein 1 (291 aa).

An N-acetylserine modification is found at Ser2. Solcar repeat units follow at residues 7-96 (KPFV…LKRL), 104-189 (ETLP…TKKH), and 198-289 (DTVY…LKKL). A run of 6 helical transmembrane segments spans residues 9–26 (FVYG…TFPI), 71–89 (GIAP…KIGT), 105–124 (TLPI…STIA), 164–183 (GVSL…LPVY), 204–224 (FLSS…VDVV), and 264–283 (GFWP…FVTY).

It belongs to the mitochondrial carrier (TC 2.A.29) family. Interacts with VDAC1.

It is found in the mitochondrion inner membrane. It catalyses the reaction sulfite(in) + sulfate(out) = sulfite(out) + sulfate(in). The catalysed reaction is thiosulfate(in) + sulfate(out) = thiosulfate(out) + sulfate(in). It carries out the reaction sulfate(out) + phosphate(in) = sulfate(in) + phosphate(out). The enzyme catalyses oxalate(in) + sulfate(out) = oxalate(out) + sulfate(in). It catalyses the reaction malonate(in) + sulfate(out) = malonate(out) + sulfate(in). The catalysed reaction is maleate(in) + sulfate(out) = maleate(out) + sulfate(in). It carries out the reaction (S)-malate(in) + sulfate(out) = (S)-malate(out) + sulfate(in). The enzyme catalyses (3S)-citramalate(in) + sulfate(out) = (3S)-citramalate(out) + sulfate(in). It catalyses the reaction (3R)-citramalate(in) + sulfate(out) = (3R)-citramalate(out) + sulfate(in). The catalysed reaction is sulfate(out) + succinate(in) = sulfate(in) + succinate(out). It carries out the reaction (S,S)-tartrate(in) + sulfate(out) = (S,S)-tartrate(out) + sulfate(in). The enzyme catalyses (2R,3R)-tartrate(in) + sulfate(out) = (2R,3R)-tartrate(out) + sulfate(in). It catalyses the reaction D-aspartate(in) + sulfate(out) = D-aspartate(out) + sulfate(in). The catalysed reaction is L-aspartate(in) + sulfate(out) = L-aspartate(out) + sulfate(in). It carries out the reaction sulfate(in) = sulfate(out). The enzyme catalyses phosphate(in) = phosphate(out). It catalyses the reaction (S)-malate(out) = (S)-malate(in). With respect to regulation, increased activity at pH 6.0. sulfate/sulfate exchange activity is inhibited strongly by pyridoxal 5'-phosphate, bathophenanthroline and the organic mercurials mersalyl, p-chloromercuribenzoate and HgCl2. In terms of biological role, antiporter that transports inorganic anions (sulfate, sulfite, thiosulfate and phosphate) and, to a lesser extent, a variety of dicarboxylates (e.g. malonate, malate and citramalate) and, even more so, aspartate. The sulfate/sulfate exchange is much higher than the phosphate/phosphate and malate/malate exchanges. The transport affinities is higher for sulfate and thiosulfate than for any other substrate. May catalyze the export of sulfite and thiosulfate (the hydrogen sulfide degradation products) from the mitochondria, thereby modulating the level of the hydrogen sulfide. Also may mediate a very low unidirectional transport of sulfate, phosphate and (S)-malate. This is Kidney mitochondrial carrier protein 1 from Homo sapiens (Human).